The following is a 1146-amino-acid chain: Error-prone DNA polymerase (1146 aa).

2 disordered regions span residues 1–43 (MGWG…WSRK) and 154–178 (ATPE…PPGP). Residues 12-26 (ELERVLSGRPGRTDP) are compositionally biased toward basic and acidic residues.

It belongs to the DNA polymerase type-C family. DnaE2 subfamily.

It is found in the cytoplasm. The enzyme catalyses DNA(n) + a 2'-deoxyribonucleoside 5'-triphosphate = DNA(n+1) + diphosphate. Functionally, DNA polymerase involved in damage-induced mutagenesis and translesion synthesis (TLS). It is not the major replicative DNA polymerase. This is Error-prone DNA polymerase from Nocardia farcinica (strain IFM 10152).